A 325-amino-acid polypeptide reads, in one-letter code: MDMWTALLILQALLLPSLADGATPALRFVAVGDWGGVPNAPFHTAREMANAKEIARTVQILGADFILSLGDNFYFTGVQDINDKRFQETFEDVFSDRSLRKVPWYVLAGNHDHLGNVSAQIAYSKISKRWNFPSPFYRLHFKIPQTNVSVAIFMLDTVTLCGNSDDFLSQQPERPRDVKLARTQLSWLKKQLAAAREDYVLVAGHYPVWSIAEHGPTHCLVKQLRPLLATYGVTAYLCGHDHNLQYLQDENGVGYVLSGAGNFMDPSKRHQRKVPNGYLRFHYGTEDSLGGFAYVEISSKEMTVTYIEASGKSLFKTRLPRRARP.

A signal peptide spans 1-21 (MDMWTALLILQALLLPSLADG). Fe cation is bound by residues D33, D71, Y74, and N110. N116 and N147 each carry an N-linked (GlcNAc...) asparagine glycan. A disulfide bond links C161 and C219. Fe cation is bound by residues H205, H240, and H242.

This sequence belongs to the metallophosphoesterase superfamily. Purple acid phosphatase family. Exists either as monomer or, after proteolytic processing, as a dimer of two chains linked by disulfide bond(s). Fe cation is required as a cofactor.

Its subcellular location is the lysosome. The catalysed reaction is a phosphate monoester + H2O = an alcohol + phosphate. Functionally, involved in osteopontin/bone sialoprotein dephosphorylation. Its expression seems to increase in certain pathological states such as Gaucher and Hodgkin diseases, the hairy cell, the B-cell, and the T-cell leukemias. In Homo sapiens (Human), this protein is Tartrate-resistant acid phosphatase type 5 (ACP5).